Here is a 152-residue protein sequence, read N- to C-terminus: Deoxyuridine 5'-triphosphate nucleotidohydrolase (152 aa).

Substrate-binding positions include 71-73 (RSG), N84, 88-90 (LID), and M98.

Belongs to the dUTPase family. Requires Mg(2+) as cofactor.

The catalysed reaction is dUTP + H2O = dUMP + diphosphate + H(+). Its pathway is pyrimidine metabolism; dUMP biosynthesis; dUMP from dCTP (dUTP route): step 2/2. Functionally, this enzyme is involved in nucleotide metabolism: it produces dUMP, the immediate precursor of thymidine nucleotides and it decreases the intracellular concentration of dUTP so that uracil cannot be incorporated into DNA. This chain is Deoxyuridine 5'-triphosphate nucleotidohydrolase, found in Aeromonas salmonicida (strain A449).